A 63-amino-acid polypeptide reads, in one-letter code: Large ribosomal subunit protein bL35 (63 aa).

This sequence belongs to the bacterial ribosomal protein bL35 family.

The chain is Large ribosomal subunit protein bL35 from Campylobacter fetus subsp. fetus (strain 82-40).